Reading from the N-terminus, the 312-residue chain is tRNA dimethylallyltransferase (312 aa).

Position 10–17 (10–17 (GPTGVGKT)) interacts with ATP. A substrate-binding site is contributed by 12-17 (TGVGKT).

This sequence belongs to the IPP transferase family. As to quaternary structure, monomer. Requires Mg(2+) as cofactor.

It catalyses the reaction adenosine(37) in tRNA + dimethylallyl diphosphate = N(6)-dimethylallyladenosine(37) in tRNA + diphosphate. Catalyzes the transfer of a dimethylallyl group onto the adenine at position 37 in tRNAs that read codons beginning with uridine, leading to the formation of N6-(dimethylallyl)adenosine (i(6)A). The polypeptide is tRNA dimethylallyltransferase (Coprothermobacter proteolyticus (strain ATCC 35245 / DSM 5265 / OCM 4 / BT)).